We begin with the raw amino-acid sequence, 926 residues long: Probable Xaa-Pro aminopeptidase PTT_10145 (926 aa).

Mn(2+) is bound by residues aspartate 274, aspartate 285, glutamate 435, and glutamate 476. Disordered stretches follow at residues 505–538, 595–615, 668–696, 711–741, and 865–926; these read GNPGTTEILNPSPTPPRRMRSENRTPRLRAPGIS, KRDSVPTAPSRPTKAKNLSPV, SSSTQTSPKPMTVPTFESRQKSHTVEEKH, IGQSNRAIGPEERRRKAQSDHHHHSRLKAAT, and MPVL…FLTR. The span at 506-515 shows a compositional bias: polar residues; the sequence is NPGTTEILNP. 2 stretches are compositionally biased toward basic and acidic residues: residues 685-696 and 719-730; these read SRQKSHTVEEKH and GPEERRRKAQSD. Residues 887-897 show a composition bias toward polar residues; that stretch reads NNATNKRSMID. Basic and acidic residues predominate over residues 900–915; sequence PAERRTRPERPERPAR.

Belongs to the peptidase M24B family. Mn(2+) serves as cofactor.

The enzyme catalyses Release of any N-terminal amino acid, including proline, that is linked to proline, even from a dipeptide or tripeptide.. In terms of biological role, catalyzes the removal of a penultimate prolyl residue from the N-termini of peptides. This chain is Probable Xaa-Pro aminopeptidase PTT_10145, found in Pyrenophora teres f. teres (strain 0-1) (Barley net blotch fungus).